The chain runs to 859 residues: Villin-like protein (859 aa).

Gelsolin-like repeat units follow at residues 24-76, 148-188, 264-308, 401-450, 521-561, and 624-665; these read LKML…EARE, VSAT…SEKA, LVVQ…QEKK, LQRQ…EDTK, TRTM…DQRE, and LVLT…WKKE. In terms of domain architecture, HP spans 793-859; it reads SMVNGSLPRE…QQAKKKLGFF (67 aa).

Belongs to the villin/gelsolin family.

Possible tumor suppressor. The chain is Villin-like protein from Mus musculus (Mouse).